Consider the following 700-residue polypeptide: Polyribonucleotide nucleotidyltransferase (700 aa).

2 residues coordinate Mg(2+): aspartate 484 and aspartate 490. Positions 551–610 (PRVIRMVVDPEKIREIIGPGGKTISKIIAETGVKIDIEEDGRLYITASDLRSGERAKQMI) constitute a KH domain. The 69-residue stretch at 620 to 688 (GEIYLGKVLR…KLGRISLSRK (69 aa)) folds into the S1 motif domain.

The protein belongs to the polyribonucleotide nucleotidyltransferase family. Requires Mg(2+) as cofactor.

Its subcellular location is the cytoplasm. It carries out the reaction RNA(n+1) + phosphate = RNA(n) + a ribonucleoside 5'-diphosphate. In terms of biological role, involved in mRNA degradation. Catalyzes the phosphorolysis of single-stranded polyribonucleotides processively in the 3'- to 5'-direction. In Thermoanaerobacter pseudethanolicus (strain ATCC 33223 / 39E) (Clostridium thermohydrosulfuricum), this protein is Polyribonucleotide nucleotidyltransferase.